A 263-amino-acid polypeptide reads, in one-letter code: Small ribosomal subunit protein uS2 (263 aa).

Serine 2 carries the N-acetylserine modification. Residues 213–223 (NAAEEARAGAT) show a composition bias toward low complexity. The disordered stretch occupies residues 213–245 (NAAEEARAGATEETEEVVAEAETEWNTETNVED). The span at 224–245 (EETEEVVAEAETEWNTETNVED) shows a compositional bias: acidic residues.

The protein belongs to the universal ribosomal protein uS2 family. As to quaternary structure, component of the small ribosomal subunit. Mature ribosomes consist of a small (40S) and a large (60S) subunit. The 40S subunit contains about 33 different proteins and 1 molecule of RNA (18S). The 60S subunit contains about 49 different proteins and 3 molecules of RNA (25S, 5.8S and 5S). Interacts with RPS21.

Its subcellular location is the cytoplasm. In terms of biological role, required for the assembly and/or stability of the 40S ribosomal subunit. Required for the processing of the 20S rRNA-precursor to mature 18S rRNA in a late step of the maturation of 40S ribosomal subunits. The sequence is that of Small ribosomal subunit protein uS2 from Clavispora lusitaniae (strain ATCC 42720) (Yeast).